The sequence spans 219 residues: Adenylate kinase (219 aa).

13–18 (GAGKGT) is a binding site for ATP. Positions 33 to 62 (STGDIFRAAIKNETKMGLEAKKYIDAGNLV) are NMP. Residues T34, R39, 60–62 (NLV), 88–91 (GYPR), and Q95 each bind AMP. Residues 129-167 (GRFICRTCGATYHKLYNKPKVEGTCDVCGGHDFYQRDDD) form an LID region. Residue R130 coordinates ATP. Zn(2+) is bound by residues C133 and C136. 139–140 (TY) contacts ATP. 2 residues coordinate Zn(2+): C153 and C156. R164 and R175 together coordinate AMP. ATP is bound at residue R203.

This sequence belongs to the adenylate kinase family. In terms of assembly, monomer.

It is found in the cytoplasm. It catalyses the reaction AMP + ATP = 2 ADP. It participates in purine metabolism; AMP biosynthesis via salvage pathway; AMP from ADP: step 1/1. In terms of biological role, catalyzes the reversible transfer of the terminal phosphate group between ATP and AMP. Plays an important role in cellular energy homeostasis and in adenine nucleotide metabolism. This Lactiplantibacillus plantarum (strain ATCC BAA-793 / NCIMB 8826 / WCFS1) (Lactobacillus plantarum) protein is Adenylate kinase.